We begin with the raw amino-acid sequence, 417 residues long: Serine hydroxymethyltransferase 1 (417 aa).

(6S)-5,6,7,8-tetrahydrofolate contacts are provided by residues L121 and 125–127; that span reads GHL. An N6-(pyridoxal phosphate)lysine modification is found at K229. Residue 355-357 participates in (6S)-5,6,7,8-tetrahydrofolate binding; it reads SPF.

The protein belongs to the SHMT family. As to quaternary structure, homodimer. Requires pyridoxal 5'-phosphate as cofactor.

It localises to the cytoplasm. The catalysed reaction is (6R)-5,10-methylene-5,6,7,8-tetrahydrofolate + glycine + H2O = (6S)-5,6,7,8-tetrahydrofolate + L-serine. The protein operates within one-carbon metabolism; tetrahydrofolate interconversion. It participates in amino-acid biosynthesis; glycine biosynthesis; glycine from L-serine: step 1/1. In terms of biological role, catalyzes the reversible interconversion of serine and glycine with tetrahydrofolate (THF) serving as the one-carbon carrier. This reaction serves as the major source of one-carbon groups required for the biosynthesis of purines, thymidylate, methionine, and other important biomolecules. Also exhibits THF-independent aldolase activity toward beta-hydroxyamino acids, producing glycine and aldehydes, via a retro-aldol mechanism. This Pectobacterium atrosepticum (strain SCRI 1043 / ATCC BAA-672) (Erwinia carotovora subsp. atroseptica) protein is Serine hydroxymethyltransferase 1.